Here is a 470-residue protein sequence, read N- to C-terminus: Cysteine--tRNA ligase (470 aa).

Residue Cys28 coordinates Zn(2+). Positions 30–40 match the 'HIGH' region motif; sequence PTVYNYIHIGN. 3 residues coordinate Zn(2+): Cys212, His237, and Glu241. The short motif at 271-275 is the 'KMSKS' region element; the sequence is KMSKS. Lys274 contributes to the ATP binding site.

Belongs to the class-I aminoacyl-tRNA synthetase family. Monomer. Zn(2+) serves as cofactor.

Its subcellular location is the cytoplasm. The enzyme catalyses tRNA(Cys) + L-cysteine + ATP = L-cysteinyl-tRNA(Cys) + AMP + diphosphate. In Levilactobacillus brevis (strain ATCC 367 / BCRC 12310 / CIP 105137 / JCM 1170 / LMG 11437 / NCIMB 947 / NCTC 947) (Lactobacillus brevis), this protein is Cysteine--tRNA ligase.